A 740-amino-acid chain; its full sequence is Polyribonucleotide nucleotidyltransferase (740 aa).

Residues Asp-492 and Asp-498 each contribute to the Mg(2+) site. One can recognise a KH domain in the interval 559-618 (PMVQTLEIQKEKIRDVIGLGGKVIKELCKTFDVEIDISENGEVKVWGNVGENVKKAVQSI). Residues 628-696 (GDIFDGEVVK…HKNRVKLTLR (69 aa)) form the S1 motif domain.

This sequence belongs to the polyribonucleotide nucleotidyltransferase family. Mg(2+) serves as cofactor.

It localises to the cytoplasm. The enzyme catalyses RNA(n+1) + phosphate = RNA(n) + a ribonucleoside 5'-diphosphate. Involved in mRNA degradation. Catalyzes the phosphorolysis of single-stranded polyribonucleotides processively in the 3'- to 5'-direction. This Orientia tsutsugamushi (strain Boryong) (Rickettsia tsutsugamushi) protein is Polyribonucleotide nucleotidyltransferase.